The sequence spans 217 residues: Phosphatidylinositol phosphate synthase (217 aa).

The next 2 helical transmembrane spans lie at 28–49 (LTPDVVTILGTTASVAGALTLF) and 55–74 (FAGACVVWFFVLFDMLDGAM). Position 31–34 (31–34 (DVVT)) interacts with a CDP-1,2-diacyl-sn-glycerol. Positions 68 and 71 each coordinate Mg(2+). 3 residues coordinate a CDP-1,2-diacyl-sn-glycerol: G72, R76, and T82. Mg(2+) is bound by residues D89 and D93. The active-site Proton acceptor is D93. A run of 4 helical transmembrane segments spans residues 95 to 112 (ISDGAVFCGLLWWIAFHM), 118 to 136 (VIATLICLVTSQVISYIKA), 156 to 173 (LIIVLTGAGVSDFPFVPW), and 179 to 200 (VGMWLLAVASVITCVQRLHTVW).

The protein belongs to the CDP-alcohol phosphatidyltransferase class-I family. Homodimer. Mg(2+) is required as a cofactor.

Its subcellular location is the cell membrane. The catalysed reaction is a CDP-1,2-diacyl-sn-glycerol + 1D-myo-inositol 3-phosphate = a 1,2-diacyl-sn-glycero-3-phospho-(1D-myo-inositol-3-phosphate) + CMP + H(+). The enzyme catalyses 1,2-di-(9Z-octadecenoyl)-sn-glycero-3-cytidine-5'-diphosphate + 1D-myo-inositol 3-phosphate = 1,2-di-(9Z-octadecenoyl)-sn-glycero-3-phospho-(1D-myo-inositol-3-phosphate) + CMP + H(+). It functions in the pathway phospholipid metabolism; phosphatidylinositol phosphate biosynthesis. With respect to regulation, competitively inhibited by several inositol 1-phosphate analogs, including the phosphonate analog 1-deoxy-1-phosphonomethyl-myo-inositol (Ino-C-P). Catalyzes the conjugation of the 1'-hydroxyl group of D-myo-inositol-3-phosphate (also named L-myo-inositol-1-phosphate) with a lipid tail of cytidine diphosphate diacylglycerol (CDP-DAG), forming phosphatidylinositol phosphate (PIP) and CMP. PIP is a precursor of phosphatidylinositol (PI) which is an essential lipid for mycobacteria required for formation of their cell wall. In Mycobacterium bovis (strain BCG / Pasteur 1173P2), this protein is Phosphatidylinositol phosphate synthase.